Reading from the N-terminus, the 143-residue chain is Large ribosomal subunit protein uL16 (143 aa).

Positions 1–17 (MLQPKRTKFRKAHKGRI) are enriched in basic residues. Residues 1–20 (MLQPKRTKFRKAHKGRIHGN) are disordered.

The protein belongs to the universal ribosomal protein uL16 family. Part of the 50S ribosomal subunit.

Binds 23S rRNA and is also seen to make contacts with the A and possibly P site tRNAs. The sequence is that of Large ribosomal subunit protein uL16 from Zymomonas mobilis subsp. mobilis (strain ATCC 31821 / ZM4 / CP4).